A 519-amino-acid polypeptide reads, in one-letter code: Methionine--tRNA ligase (519 aa).

The 'HIGH' region signature appears at 11-21 (AYPNAAPHVGH). The short motif at 299 to 303 (KMSKS) is the 'KMSKS' region element. Position 302 (K302) interacts with ATP. The interval 500-519 (LPPPTGVFPRYQPPQPPEGK) is disordered.

The protein belongs to the class-I aminoacyl-tRNA synthetase family. MetG type 2B subfamily. As to quaternary structure, monomer.

It localises to the cytoplasm. It catalyses the reaction tRNA(Met) + L-methionine + ATP = L-methionyl-tRNA(Met) + AMP + diphosphate. Its function is as follows. Is required not only for elongation of protein synthesis but also for the initiation of all mRNA translation through initiator tRNA(fMet) aminoacylation. This chain is Methionine--tRNA ligase (metG), found in Mycobacterium tuberculosis (strain CDC 1551 / Oshkosh).